The sequence spans 91 residues: Probable Fe(2+)-trafficking protein (91 aa).

This sequence belongs to the Fe(2+)-trafficking protein family.

Functionally, could be a mediator in iron transactions between iron acquisition and iron-requiring processes, such as synthesis and/or repair of Fe-S clusters in biosynthetic enzymes. The protein is Probable Fe(2+)-trafficking protein of Thiobacillus denitrificans (strain ATCC 25259 / T1).